The sequence spans 456 residues: Bestrophin homolog 18 (456 aa).

Helical transmembrane passes span 29–49 (WSAI…VSAI), 83–103 (GFFI…IGFI), 234–254 (IIYP…GILA), and 267–287 (MIDL…MGWL). The interval 416–456 (ASSSRSLERQRSPGSFRMETLTPGSPTNTPIEPIDKIDKKK) is disordered.

The protein belongs to the anion channel-forming bestrophin (TC 1.A.46) family. Calcium-sensitive chloride channel subfamily. In terms of assembly, forms oligomers.

The protein resides in the cell membrane. Functionally, forms chloride channels. This chain is Bestrophin homolog 18 (best-18), found in Caenorhabditis elegans.